A 506-amino-acid polypeptide reads, in one-letter code: MSFSVEVLAGIAIELQRGIGHQDRFQRLITTLRQVLACDASALLRYESRQFIPLAIDGLAQDVLGRRFTLEGHPRLEAIARAGDVVRFPADSDLPDPYDGLIPGQESLKVHACVGLPLFAGQNLIGALTLDAMTPEQFEVFSDEELRLVAALAAGALSNALLIEQLESQNMLPGSSGVFEPIKETHMIGLSPAMTQLKKEIEIVAGSDLNVLIGGETGTGKELVAKAIHQSSPRAVNPLVYLNCAALPESVAESELFGHVKGAFTGAISNRSGKFEMADNGTLFLDEIGELSLALQAKLLRVLQYGDIQRVGDDRSLRVDVRVLAATNRDLREEVLAGRFRADLFYRLSVFPLFVPPLRERGDDVVLLAGYFCEQCRLRLGLSRVVLSPGARRHLLNYGWPGNVRELEHAIHRAVVLARATRAGDEVVLEEQHFALSEDVLPAPSAESFLALPACRNLRESTENFQREMIRQALAQNNHNWAASARALETDVANLHRLAKRLGLKD.

Aspartate 57 bears the 4-aspartylphosphate mark. A Sigma-54 factor interaction domain is found at 187 to 416; sequence MIGLSPAMTQ…LEHAIHRAVV (230 aa). Residues 215 to 222 and 278 to 287 contribute to the ATP site; these read GETGTGKE and ADNGTLFLDE. Positions 481-500 form a DNA-binding region, H-T-H motif; the sequence is WAASARALETDVANLHRLAK.

It functions in the pathway nitrogen metabolism; nitric oxide reduction. In terms of biological role, required for the expression of anaerobic nitric oxide (NO) reductase, acts as a transcriptional activator for at least the norVW operon. Activation also requires sigma-54. In Salmonella paratyphi C (strain RKS4594), this protein is Anaerobic nitric oxide reductase transcription regulator NorR.